We begin with the raw amino-acid sequence, 201 residues long: Protein CD300H (201 aa).

An N-terminal signal peptide occupies residues 1–24 (MTQRAGAAMLPSALLLLCVPGCLT). In terms of domain architecture, Ig-like V-type spans 25–123 (VSGPSTVMGA…ATILQEDGLS (99 aa)). At 25-168 (VSGPSTVMGA…CQGSLPSSTC (144 aa)) the chain is on the extracellular side. A disulfide bridge links cysteine 43 with cysteine 111. N-linked (GlcNAc...) asparagine glycosylation occurs at asparagine 100. A helical transmembrane segment spans residues 169–189 (FLLLPLLKVPLLLSILGAILW). The Cytoplasmic segment spans residues 190 to 201 (VNRPWRTPWTES).

Belongs to the CD300 family. Interacts with TYROBP and HCST. As to expression, expressed on CD16+ monocytes and myeloid dendritic cells (at protein level). By contrast, not detected in lymphocytes nor granulocytes (at protein level).

It is found in the membrane. The protein localises to the secreted. Functionally, may play an important role in innate immunity by mediating a signal for the production of a neutrophil chemoattractant. The polypeptide is Protein CD300H (Homo sapiens (Human)).